A 338-amino-acid chain; its full sequence is N-acetyl-gamma-glutamyl-phosphate reductase (338 aa).

Cysteine 148 is a catalytic residue.

This sequence belongs to the NAGSA dehydrogenase family. Type 1 subfamily.

It is found in the cytoplasm. The enzyme catalyses N-acetyl-L-glutamate 5-semialdehyde + phosphate + NADP(+) = N-acetyl-L-glutamyl 5-phosphate + NADPH + H(+). It participates in amino-acid biosynthesis; L-arginine biosynthesis; N(2)-acetyl-L-ornithine from L-glutamate: step 3/4. Functionally, catalyzes the NADPH-dependent reduction of N-acetyl-5-glutamyl phosphate to yield N-acetyl-L-glutamate 5-semialdehyde. The polypeptide is N-acetyl-gamma-glutamyl-phosphate reductase (Leptospira borgpetersenii serovar Hardjo-bovis (strain JB197)).